A 156-amino-acid chain; its full sequence is Ribosomal RNA large subunit methyltransferase H (156 aa).

Residues Leu-73, Gly-104, and 123–128 (LSALTL) each bind S-adenosyl-L-methionine.

Belongs to the RNA methyltransferase RlmH family. Homodimer.

It is found in the cytoplasm. It carries out the reaction pseudouridine(1915) in 23S rRNA + S-adenosyl-L-methionine = N(3)-methylpseudouridine(1915) in 23S rRNA + S-adenosyl-L-homocysteine + H(+). In terms of biological role, specifically methylates the pseudouridine at position 1915 (m3Psi1915) in 23S rRNA. This chain is Ribosomal RNA large subunit methyltransferase H, found in Shewanella piezotolerans (strain WP3 / JCM 13877).